The chain runs to 204 residues: Colicin-A (204 aa).

2 helical membrane passes run 139 to 161 and 165 to 187; these read SWVLSGIASSVALGIFSATLGAY and LGVPAIAVGIAGILLAAVVGALI.

The protein belongs to the channel forming colicin family.

It is found in the cell membrane. This colicin is a channel-forming colicin. This class of transmembrane toxins depolarize the cytoplasmic membrane, leading to dissipation of cellular energy. Functionally, colicins are polypeptide toxins produced by and active against E.coli and closely related bacteria. This chain is Colicin-A (caa), found in Escherichia coli.